The chain runs to 689 residues: tRNA wybutosine-synthesizing protein 4 (689 aa).

The disordered stretch occupies residues Met-1–Val-33. Basic residues predominate over residues Arg-14–Lys-26. S-adenosyl-L-methionine contacts are provided by residues Arg-84, Gly-111, Asp-137, Asp-183–Leu-184, and Glu-215.

Belongs to the methyltransferase superfamily. LCMT family.

The catalysed reaction is 7-[(3S)-3-amino-3-carboxypropyl]wyosine(37) in tRNA(Phe) + S-adenosyl-L-methionine = 7-[(3S)-(3-amino-3-methoxycarbonyl)propyl]wyosine(37) in tRNA(Phe) + S-adenosyl-L-homocysteine. The enzyme catalyses 7-[(3S)-(3-amino-3-methoxycarbonyl)propyl]wyosine(37) in tRNA(Phe) + S-adenosyl-L-methionine + CO2 = wybutosine(37) in tRNA(Phe) + S-adenosyl-L-homocysteine + 2 H(+). Its pathway is tRNA modification; wybutosine-tRNA(Phe) biosynthesis. Its function is as follows. Probable S-adenosyl-L-methionine-dependent methyltransferase that acts as a component of the wybutosine biosynthesis pathway. Wybutosine is a hyper modified guanosine with a tricyclic base found at the 3'-position adjacent to the anticodon of eukaryotic phenylalanine tRNA. May methylate the carboxyl group of leucine residues to form alpha-leucine ester residues. In Candida albicans (strain SC5314 / ATCC MYA-2876) (Yeast), this protein is tRNA wybutosine-synthesizing protein 4 (PPM2).